An 843-amino-acid polypeptide reads, in one-letter code: Glycogen phosphorylase, brain form (843 aa).

Alanine 2 is subject to N-acetylalanine. Position 15 is a phosphoserine; by PHK; in form phosphorylase A (serine 15). AMP is bound by residues aspartate 43, tyrosine 197, and arginine 310. Residue tyrosine 197 is modified to Phosphotyrosine. Tyrosine 473 is subject to Phosphotyrosine. At serine 524 the chain carries Phosphoserine. Residue lysine 569 coordinates pyridoxal 5'-phosphate. The tract at residues 677–678 (TG) is pyridoxal 5'-phosphate. Residue lysine 681 is modified to N6-(pyridoxal phosphate)lysine.

It belongs to the glycogen phosphorylase family. In terms of assembly, homodimer. Dimers associate into a tetramer to form the enzymatically active phosphorylase A. Pyridoxal 5'-phosphate is required as a cofactor. Post-translationally, phosphorylation of Ser-15 converts phosphorylase B (unphosphorylated) to phosphorylase A.

The enzyme catalyses [(1-&gt;4)-alpha-D-glucosyl](n) + phosphate = [(1-&gt;4)-alpha-D-glucosyl](n-1) + alpha-D-glucose 1-phosphate. With respect to regulation, activity of phosphorylase is controlled both by allosteric means (through the non-covalent binding of metabolites) and by covalent modification. Thus AMP allosterically activates, whereas ATP, ADP, and glucose-6-phosphate allosterically inhibit, phosphorylase B. In terms of biological role, glycogen phosphorylase that regulates glycogen mobilization. Phosphorylase is an important allosteric enzyme in carbohydrate metabolism. Enzymes from different sources differ in their regulatory mechanisms and in their natural substrates. However, all known phosphorylases share catalytic and structural properties. The chain is Glycogen phosphorylase, brain form (Pygb) from Mus musculus (Mouse).